Reading from the N-terminus, the 392-residue chain is L-serine phosphate decarboxylase (392 aa).

The segment at 22 to 29 is required for catalytic activity; that stretch reads NAGSHSPS. N180 contributes to the O-phospho-L-serine binding site. At K243 the chain carries N6-(pyridoxal phosphate)lysine. 2 residues coordinate O-phospho-L-serine: R354 and R368.

Belongs to the class-II pyridoxal-phosphate-dependent aminotransferase family. As to quaternary structure, homodimer. Pyridoxal 5'-phosphate serves as cofactor.

The enzyme catalyses O-phospho-L-serine + H(+) = phosphoethanolamine + CO2. It participates in cofactor biosynthesis. Pyridoxal phosphate (PLP)-dependent decarboxylase involved in the biosynthesis of norcobamides, cofactors in the tetrachloroethene reductive dehalogenase PceA of S.multivorans. Catalyzes the decarboxylation of L-serine O-phosphate to ethanolamine O-phosphate, the precursor for the linkage between the nucleotide loop and the corrin ring in norcobamide. Less active with L-threonine phosphate. No activity with L-serine or L-threonine. Has no aminotransferase activity as no production of L-glutamate with L-histidinol phosphate and 2-oxoglutarate as substrates. Complements growth defects in the S.enterica cobD deletion mutant, but of the cobamides, the norpseudo-vitamin B12 (norpseudo-B12) rather than the pseudo-B12 is produced in the mutant. However, addition of L-threonine phosphate to the culture minimal medium of the mutant results in formation of also the pseudo-B12, indicating the dual substrate specificity of this enzyme. The sequence is that of L-serine phosphate decarboxylase from Sulfurospirillum multivorans (strain DM 12446 / JCM 15788 / NBRC 109480).